We begin with the raw amino-acid sequence, 55 residues long: Large ribosomal subunit protein bL33B (55 aa).

This sequence belongs to the bacterial ribosomal protein bL33 family.

This chain is Large ribosomal subunit protein bL33B, found in Salinispora tropica (strain ATCC BAA-916 / DSM 44818 / JCM 13857 / NBRC 105044 / CNB-440).